We begin with the raw amino-acid sequence, 185 residues long: Large ribosomal subunit protein uL22 (185 aa).

Belongs to the universal ribosomal protein uL22 family. In terms of assembly, part of the 50S ribosomal subunit.

Functionally, this protein binds specifically to 23S rRNA. It makes multiple contacts with different domains of the 23S rRNA in the assembled 50S subunit and ribosome. Its function is as follows. The globular domain of the protein is located near the polypeptide exit tunnel on the outside of the subunit, while an extended beta-hairpin is found that lines the wall of the exit tunnel in the center of the 70S ribosome. This Pyrobaculum aerophilum (strain ATCC 51768 / DSM 7523 / JCM 9630 / CIP 104966 / NBRC 100827 / IM2) protein is Large ribosomal subunit protein uL22.